The sequence spans 510 residues: Thermostable carboxypeptidase 1 (510 aa).

The Peptidase M32 domain maps to Pro3–Ala506. An HPF motif is present at residues His245 to Phe247. The DXRXT motif lies at Asp255 to Thr259. Position 276 (His276) interacts with Zn(2+). The HEXXH motif lies at His276–His280. Glu277 serves as the catalytic Proton donor/acceptor. Residues His280 and Glu306 each coordinate Zn(2+). The short motif at His305–Gln308 is the HES/GQ element. Positions Ile357–Asp362 match the I/NRXXA/SD motif. A GXXQDXHW motif is present at residues Gly412–Trp419.

Belongs to the peptidase M32 family. As to quaternary structure, homodimer. Requires Zn(2+) as cofactor.

The enzyme catalyses Release of a C-terminal amino acid with broad specificity, except for -Pro.. Broad specificity carboxypetidase that releases amino acids sequentially from the C-terminus, including neutral, aromatic, polar and basic residues, but not Pro. Has lower activity with substrates ending with Gly or Glu. The polypeptide is Thermostable carboxypeptidase 1 (Thermus thermophilus (strain ATCC 27634 / DSM 579 / HB8)).